A 102-amino-acid polypeptide reads, in one-letter code: Putative pterin-4-alpha-carbinolamine dehydratase (102 aa).

It belongs to the pterin-4-alpha-carbinolamine dehydratase family.

The catalysed reaction is (4aS,6R)-4a-hydroxy-L-erythro-5,6,7,8-tetrahydrobiopterin = (6R)-L-erythro-6,7-dihydrobiopterin + H2O. This chain is Putative pterin-4-alpha-carbinolamine dehydratase, found in Burkholderia multivorans (strain ATCC 17616 / 249).